Reading from the N-terminus, the 471-residue chain is Probable ribonuclease FAU-1 (471 aa).

Positions 93–139 (GAVFDAAVDHTVGGGAILDLGDDREAYLPFGAVDDHVTDGDTLRVAI) constitute an S1 motif domain.

It belongs to the FAU-1 family.

Functionally, probable RNase involved in rRNA stability through maturation and/or degradation of precursor rRNAs. Binds to RNA in loop regions with AU-rich sequences. This is Probable ribonuclease FAU-1 from Halobacterium salinarum (strain ATCC 29341 / DSM 671 / R1).